A 263-amino-acid chain; its full sequence is 3-deoxy-manno-octulosonate cytidylyltransferase (263 aa).

It belongs to the KdsB family.

Its subcellular location is the cytoplasm. It carries out the reaction 3-deoxy-alpha-D-manno-oct-2-ulosonate + CTP = CMP-3-deoxy-beta-D-manno-octulosonate + diphosphate. It functions in the pathway nucleotide-sugar biosynthesis; CMP-3-deoxy-D-manno-octulosonate biosynthesis; CMP-3-deoxy-D-manno-octulosonate from 3-deoxy-D-manno-octulosonate and CTP: step 1/1. The protein operates within bacterial outer membrane biogenesis; lipopolysaccharide biosynthesis. In terms of biological role, activates KDO (a required 8-carbon sugar) for incorporation into bacterial lipopolysaccharide in Gram-negative bacteria. The polypeptide is 3-deoxy-manno-octulosonate cytidylyltransferase (Burkholderia thailandensis (strain ATCC 700388 / DSM 13276 / CCUG 48851 / CIP 106301 / E264)).